The following is a 245-amino-acid chain: Ribonuclease PH (245 aa).

Phosphate is bound by residues Arg-93 and 131 to 133 (GTR).

Belongs to the RNase PH family. As to quaternary structure, homohexameric ring arranged as a trimer of dimers.

It carries out the reaction tRNA(n+1) + phosphate = tRNA(n) + a ribonucleoside 5'-diphosphate. Phosphorolytic 3'-5' exoribonuclease that plays an important role in tRNA 3'-end maturation. Removes nucleotide residues following the 3'-CCA terminus of tRNAs; can also add nucleotides to the ends of RNA molecules by using nucleoside diphosphates as substrates, but this may not be physiologically important. Probably plays a role in initiation of 16S rRNA degradation (leading to ribosome degradation) during starvation. This is Ribonuclease PH from Corynebacterium glutamicum (strain ATCC 13032 / DSM 20300 / JCM 1318 / BCRC 11384 / CCUG 27702 / LMG 3730 / NBRC 12168 / NCIMB 10025 / NRRL B-2784 / 534).